Here is a 48-residue protein sequence, read N- to C-terminus: uncharacterized protein (48 aa).

A disordered region spans residues 1–30; that stretch reads MLGRTKLGNRNAQANNNAKKKNGFQTHFDS.

This is an uncharacterized protein from Bacillus subtilis (strain 168).